The chain runs to 360 residues: Phenylalanine--tRNA ligase alpha subunit (360 aa).

Residue Glu260 coordinates Mg(2+).

This sequence belongs to the class-II aminoacyl-tRNA synthetase family. Phe-tRNA synthetase alpha subunit type 1 subfamily. In terms of assembly, tetramer of two alpha and two beta subunits. Mg(2+) serves as cofactor.

It is found in the cytoplasm. It catalyses the reaction tRNA(Phe) + L-phenylalanine + ATP = L-phenylalanyl-tRNA(Phe) + AMP + diphosphate + H(+). The polypeptide is Phenylalanine--tRNA ligase alpha subunit (Bradyrhizobium sp. (strain ORS 278)).